The following is a 363-amino-acid chain: Peptide chain release factor 1 (363 aa).

Residue glutamine 237 is modified to N5-methylglutamine. Residues 284-296 show a composition bias toward basic and acidic residues; sequence EDEKRRSAEESTR. The tract at residues 284-306 is disordered; it reads EDEKRRSAEESTRRSLVASGDRS.

Belongs to the prokaryotic/mitochondrial release factor family. Methylated by PrmC. Methylation increases the termination efficiency of RF1.

The protein resides in the cytoplasm. Peptide chain release factor 1 directs the termination of translation in response to the peptide chain termination codons UAG and UAA. This chain is Peptide chain release factor 1, found in Shewanella putrefaciens (strain CN-32 / ATCC BAA-453).